The chain runs to 66 residues: MKYTELKDKSIKELEELLHAKKAELFELRVKLKAMQLSNPNEIKKARRNIARIKTAINAHYSSSVE.

This sequence belongs to the universal ribosomal protein uL29 family.

This is Large ribosomal subunit protein uL29 from Helicobacter pylori (strain P12).